The sequence spans 122 residues: Large ribosomal subunit protein uL14 (122 aa).

Belongs to the universal ribosomal protein uL14 family. As to quaternary structure, part of the 50S ribosomal subunit. Forms a cluster with proteins L3 and L19. In the 70S ribosome, L14 and L19 interact and together make contacts with the 16S rRNA in bridges B5 and B8.

Its function is as follows. Binds to 23S rRNA. Forms part of two intersubunit bridges in the 70S ribosome. This chain is Large ribosomal subunit protein uL14, found in Paracidovorax citrulli (strain AAC00-1) (Acidovorax citrulli).